A 443-amino-acid chain; its full sequence is ATP-dependent protease ATPase subunit HslU (443 aa).

ATP is bound by residues Ile18, 60–65 (GVGKTE), Asp256, Glu321, and Arg393.

Belongs to the ClpX chaperone family. HslU subfamily. In terms of assembly, a double ring-shaped homohexamer of HslV is capped on each side by a ring-shaped HslU homohexamer. The assembly of the HslU/HslV complex is dependent on binding of ATP.

Its subcellular location is the cytoplasm. In terms of biological role, ATPase subunit of a proteasome-like degradation complex; this subunit has chaperone activity. The binding of ATP and its subsequent hydrolysis by HslU are essential for unfolding of protein substrates subsequently hydrolyzed by HslV. HslU recognizes the N-terminal part of its protein substrates and unfolds these before they are guided to HslV for hydrolysis. This Salmonella arizonae (strain ATCC BAA-731 / CDC346-86 / RSK2980) protein is ATP-dependent protease ATPase subunit HslU.